The chain runs to 498 residues: Glycerol kinase (498 aa).

Thr12 lines the ADP pocket. ATP-binding residues include Thr12, Thr13, and Ser14. Thr12 is a binding site for sn-glycerol 3-phosphate. Arg16 is a binding site for ADP. Residues Arg82, Glu83, Tyr134, and Asp243 each coordinate sn-glycerol 3-phosphate. Glycerol-binding residues include Arg82, Glu83, Tyr134, Asp243, and Gln244. ADP-binding residues include Thr265 and Gly308. ATP is bound by residues Thr265, Gly308, Gln312, and Gly411. Gly411 contacts ADP.

It belongs to the FGGY kinase family.

The catalysed reaction is glycerol + ATP = sn-glycerol 3-phosphate + ADP + H(+). The protein operates within polyol metabolism; glycerol degradation via glycerol kinase pathway; sn-glycerol 3-phosphate from glycerol: step 1/1. With respect to regulation, inhibited by fructose 1,6-bisphosphate (FBP). Functionally, key enzyme in the regulation of glycerol uptake and metabolism. Catalyzes the phosphorylation of glycerol to yield sn-glycerol 3-phosphate. The polypeptide is Glycerol kinase (Brucella canis (strain ATCC 23365 / NCTC 10854 / RM-666)).